The following is a 141-amino-acid chain: Putative antiporter subunit mnhB2 (141 aa).

Helical transmembrane passes span 10–30 (TVTKLVVFILLTFGFYVFFAG), 35–55 (GGGFIGGLIFSSAFILMFLAF), 70–90 (ILMIIGALVSSITAIMPTFFG), and 114–134 (ITLFELGILFSVVGVIVTVML).

It belongs to the CPA3 antiporters (TC 2.A.63) subunit B family. In terms of assembly, may form a heterooligomeric complex that consists of seven subunits: mnhA2, mnhB2, mnhC2, mnhD2, mnhE2, mnhF2 and mnhG2.

The protein resides in the cell membrane. This is Putative antiporter subunit mnhB2 (mnhB2) from Staphylococcus aureus (strain MRSA252).